The following is a 198-amino-acid chain: Small ribosomal subunit protein uS4 (198 aa).

The S4 RNA-binding domain occupies 88–153 (LRLDNVMFRM…AQRYKDILEV (66 aa)).

It belongs to the universal ribosomal protein uS4 family. In terms of assembly, part of the 30S ribosomal subunit. Contacts protein S5. The interaction surface between S4 and S5 is involved in control of translational fidelity.

In terms of biological role, one of the primary rRNA binding proteins, it binds directly to 16S rRNA where it nucleates assembly of the body of the 30S subunit. Functionally, with S5 and S12 plays an important role in translational accuracy. The chain is Small ribosomal subunit protein uS4 from Lachnoclostridium phytofermentans (strain ATCC 700394 / DSM 18823 / ISDg) (Clostridium phytofermentans).